Consider the following 372-residue polypeptide: tRNA-specific 2-thiouridylase MnmA (372 aa).

ATP-binding positions include 16–23 (GMSGGVDS) and M42. The interval 102–104 (NPD) is interaction with target base in tRNA. C107 acts as the Nucleophile in catalysis. C107 and C205 are disulfide-bonded. G132 contacts ATP. The tract at residues 155–157 (KDQ) is interaction with tRNA. The Cysteine persulfide intermediate role is filled by C205. Positions 317–318 (RY) are interaction with tRNA.

The protein belongs to the MnmA/TRMU family.

The protein localises to the cytoplasm. The enzyme catalyses S-sulfanyl-L-cysteinyl-[protein] + uridine(34) in tRNA + AH2 + ATP = 2-thiouridine(34) in tRNA + L-cysteinyl-[protein] + A + AMP + diphosphate + H(+). In terms of biological role, catalyzes the 2-thiolation of uridine at the wobble position (U34) of tRNA, leading to the formation of s(2)U34. This chain is tRNA-specific 2-thiouridylase MnmA, found in Shewanella baltica (strain OS185).